The following is a 336-amino-acid chain: tRNA N6-adenosine threonylcarbamoyltransferase (336 aa).

Positions 115 and 119 each coordinate Fe cation. Substrate is bound by residues 137 to 141 (LVSGG), Asp-170, Gly-183, Asp-187, and Asn-276. Asp-302 lines the Fe cation pocket.

It belongs to the KAE1 / TsaD family. The cofactor is Fe(2+).

It is found in the cytoplasm. It carries out the reaction L-threonylcarbamoyladenylate + adenosine(37) in tRNA = N(6)-L-threonylcarbamoyladenosine(37) in tRNA + AMP + H(+). Functionally, required for the formation of a threonylcarbamoyl group on adenosine at position 37 (t(6)A37) in tRNAs that read codons beginning with adenine. Is involved in the transfer of the threonylcarbamoyl moiety of threonylcarbamoyl-AMP (TC-AMP) to the N6 group of A37, together with TsaE and TsaB. TsaD likely plays a direct catalytic role in this reaction. This Streptococcus suis (strain 98HAH33) protein is tRNA N6-adenosine threonylcarbamoyltransferase.